We begin with the raw amino-acid sequence, 158 residues long: NAD(P)H-quinone oxidoreductase subunit J, chloroplastic (158 aa).

This sequence belongs to the complex I 30 kDa subunit family. As to quaternary structure, NDH is composed of at least 16 different subunits, 5 of which are encoded in the nucleus.

The protein localises to the plastid. It localises to the chloroplast thylakoid membrane. It catalyses the reaction a plastoquinone + NADH + (n+1) H(+)(in) = a plastoquinol + NAD(+) + n H(+)(out). It carries out the reaction a plastoquinone + NADPH + (n+1) H(+)(in) = a plastoquinol + NADP(+) + n H(+)(out). NDH shuttles electrons from NAD(P)H:plastoquinone, via FMN and iron-sulfur (Fe-S) centers, to quinones in the photosynthetic chain and possibly in a chloroplast respiratory chain. The immediate electron acceptor for the enzyme in this species is believed to be plastoquinone. Couples the redox reaction to proton translocation, and thus conserves the redox energy in a proton gradient. In Capsella bursa-pastoris (Shepherd's purse), this protein is NAD(P)H-quinone oxidoreductase subunit J, chloroplastic.